We begin with the raw amino-acid sequence, 261 residues long: Ribosome-inactivating protein PD-L3/PD-L4 (261 aa).

An N-linked (GlcNAc...) asparagine; in PD-L3 glycan is attached at Asn10. Intrachain disulfides connect Cys34/Cys258 and Cys84/Cys105. Glu175 is a catalytic residue.

Belongs to the ribosome-inactivating protein family. Type 1 RIP subfamily.

It carries out the reaction Endohydrolysis of the N-glycosidic bond at one specific adenosine on the 28S rRNA.. Functionally, inhibits protein synthesis. Does not cleave supercoiled pBR322 dsDNA. The chain is Ribosome-inactivating protein PD-L3/PD-L4 from Phytolacca dioica (Bella sombra tree).